Here is a 119-residue protein sequence, read N- to C-terminus: Large ribosomal subunit protein uL18 (119 aa).

This sequence belongs to the universal ribosomal protein uL18 family. Part of the 50S ribosomal subunit; part of the 5S rRNA/L5/L18/L25 subcomplex. Contacts the 5S and 23S rRNAs.

In terms of biological role, this is one of the proteins that bind and probably mediate the attachment of the 5S RNA into the large ribosomal subunit, where it forms part of the central protuberance. This Xanthomonas oryzae pv. oryzae (strain PXO99A) protein is Large ribosomal subunit protein uL18.